The following is a 458-amino-acid chain: Serine/threonine-protein kinase tricornered (458 aa).

In terms of domain architecture, Protein kinase spans 92-389 (FEALKVIGRG…LEDLKSVPFF (298 aa)). ATP contacts are provided by residues 98 to 106 (IGRGAFGEV) and Lys-121. Positions 118–179 (YAMKVLRKAD…EFLPGGDMMT (62 aa)) are interaction with mats and Mob1. The active-site Proton acceptor is the Asp-215. A Phosphoserine modification is found at Ser-287. Positions 390-458 (RGVDWEHIRE…YKRFEVRNLE (69 aa)) constitute an AGC-kinase C-terminal domain. A Phosphothreonine modification is found at Thr-448.

This sequence belongs to the protein kinase superfamily. AGC Ser/Thr protein kinase family. Interacts with, and is activated by, Mob1. Requires Mg(2+) as cofactor.

The protein resides in the cytoplasm. The protein localises to the nucleus. The catalysed reaction is L-seryl-[protein] + ATP = O-phospho-L-seryl-[protein] + ADP + H(+). It catalyses the reaction L-threonyl-[protein] + ATP = O-phospho-L-threonyl-[protein] + ADP + H(+). Serine/threonine-protein kinase involved in controlling cell structure and proliferation of a variety of polarized outgrowths including epidermal hairs, bristles, arista laterals, and dendrites. Together with fry, maintains the integrity of epidermal hairs and is an essential component of the signaling pathway regulating dendritic branching of sensory neurons. Reduces neurite outgrowth by phosphorylating pav/pavarotti, thereby inhibiting its function in microtubule-microtubule sliding. This is Serine/threonine-protein kinase tricornered from Drosophila pseudoobscura pseudoobscura (Fruit fly).